Here is a 72-residue protein sequence, read N- to C-terminus: DNA-directed RNA polymerase subunit omega (72 aa).

This sequence belongs to the RNA polymerase subunit omega family. In terms of assembly, the RNAP catalytic core consists of 2 alpha, 1 beta, 1 beta' and 1 omega subunit. When a sigma factor is associated with the core the holoenzyme is formed, which can initiate transcription.

The enzyme catalyses RNA(n) + a ribonucleoside 5'-triphosphate = RNA(n+1) + diphosphate. In terms of biological role, promotes RNA polymerase assembly. Latches the N- and C-terminal regions of the beta' subunit thereby facilitating its interaction with the beta and alpha subunits. This is DNA-directed RNA polymerase subunit omega from Lactobacillus johnsonii (strain CNCM I-12250 / La1 / NCC 533).